Here is a 715-residue protein sequence, read N- to C-terminus: Protein DOA1 (715 aa).

WD repeat units follow at residues 11–40 (GHDQ…RLWS), 53–82 (GQGF…NGVP), 97–125 (GHQG…KVWK), 135–166 (AHNA…KLWQ), 177–206 (IHND…KLVD), 218–247 (GHES…RIWS), and 259–288 (LPAI…RIFS). The residue at position 332 (S332) is a Phosphoserine. In terms of domain architecture, PFU spans 352-449 (AHQFSNSSWK…NGISLDQPND (98 aa)). The interval 434–440 (FILKNTN) is interaction with HSE1. The PUL domain occupies 465–715 (KVLPVKQYLI…RFKDIFDDLS (251 aa)). ARM repeat units follow at residues 478–512 (YNPD…LHDI), 513–543 (DESW…VRLI), 544–582 (VKKL…CFNN), 583–635 (ENWG…LVTK), 636–680 (GNSD…LATV), and 681–715 (EPTL…DDLS).

Belongs to the WD repeat PLAP family. As to quaternary structure, forms a complex composed of CDC48, NPL4, UFD1, DOA1, SHP1 and deubiquitinase OTU1; within the complex interacts with CDC48. Interacts (via PUL domain) with CDC48 (via C-terminus); the interaction is direct. Forms a complex composed of CDC48, DOA1, deubiquitinase UBP3 and probably BRE5; within the complex interacts with CDC48 and UBP3. May form a complex composed of VPS27, HSE1 and DOA1. Interacts with HSE1 (via SH3 domain). Interacts (via WD repeats and PFU domain) with ubiquitin; the interaction is direct. Interacts with ubiquitinated FZO1 but not unmodified FZO1; the interaction recruits FZO1 to CDC48 and promotes FZO1 proteasomal degradation.

The protein localises to the nucleus. It is found in the cytoplasm. Its subcellular location is the mitochondrion outer membrane. It localises to the endosome membrane. Its function is as follows. Ubiquitin-binding protein involved in protein ubiquitination, sorting and degradation. Acts as a ubiquitinated substrate-recruiting adapter for chaperone ATPase CDC48 by binding mono- or polyubiquitin chains. Depending on the context, promotes or prevents proteasomal degradation of ubiquitinated proteins. Involved in the ubiquitin fusion degradation (UFD) pathway by promoting the degradation of ubiquitinated proteins. Involved in the mitochondria-associated degradation pathway (MAD) by promoting the degradation of several ubiquitinated membrane proteins. By competing with UFD2 to bind CDC48, prevents the multi-ubiquitination and subsequent degradation of UFD2-dependent substrates. Required for ribophagy, a process which relocalizes ribosomal particles into the vacuole for degradation in response to starvation. Involved in the ubiquitin-mediated sorting of membrane proteins into multivesicular bodies (MVBs). In addition, plays an essential role in maintaining cellular ubiquitin levels. May affect indirectly the degradation of ubiquitinylated proteins by regulating cellular ubiquitin levels. The protein is Protein DOA1 of Saccharomyces cerevisiae (strain ATCC 204508 / S288c) (Baker's yeast).